The sequence spans 554 residues: MTPLIFVTGGVVSSLGKGIAAASLAAILEARGLKVTMMKLDPYINVDPGTMSPFQHGEVYVTDDGAETDLDLGHYERFVRTRLSRKNSVTTGRIYENVIRKERRGDYLGATVQVIPHITDEIRRCIDEATEGYDVALVEIGGTVGDIESLPFLEAIRQVRTERGPEKALFMHLTLVPYIGAAGELKTKPTQHSVKELRSIGIQPDVLLCRSEQAVPDSERRKIAQFTNVSERAVISVPDVDVLYRIPSGLHAQGLDEIVVNQLKLADKVGPVDLSMWEDAVDATLHPLDEVTIAVVGKYVDHQDAYKSVGEALKHGGLRQRTKVNLKWLEAQDLEGTDMAALADVDGILVPGGFGDRGFEGKVLTSKFAREQQVPYFGICYGMQAAVVDYARNVVGLEGANSTENDRQSPNPVIGLITEWRTATGDVEKRDDKSDLGGTMRLGLQEQRLKPGTLARELYGKDVVAERHRHRYEFNNRYRTQLEDAGLVIAGKSMDDTLVEVVELPRDAHPWFLACQAHPEFLSTPRDGHPLFIGFIRAARERKAGGKLLQEVRA.

Residues 1-265 (MTPLIFVTGG…DEIVVNQLKL (265 aa)) are amidoligase domain. Residue S13 coordinates CTP. S13 contacts UTP. ATP-binding positions include 14 to 19 (SLGKGI) and D71. D71 and E139 together coordinate Mg(2+). Residues 146–148 (DIE), 186–191 (KTKPTQ), and K222 contribute to the CTP site. UTP contacts are provided by residues 186–191 (KTKPTQ) and K222. The 254-residue stretch at 292–545 (TIAVVGKYVD…IRAARERKAG (254 aa)) folds into the Glutamine amidotransferase type-1 domain. Position 353 (G353) interacts with L-glutamine. The active-site Nucleophile; for glutamine hydrolysis is the C380. L-glutamine contacts are provided by residues 381 to 384 (YGMQ), E404, and R471. Catalysis depends on residues H518 and E520.

It belongs to the CTP synthase family. As to quaternary structure, homotetramer.

The enzyme catalyses UTP + L-glutamine + ATP + H2O = CTP + L-glutamate + ADP + phosphate + 2 H(+). It carries out the reaction L-glutamine + H2O = L-glutamate + NH4(+). The catalysed reaction is UTP + NH4(+) + ATP = CTP + ADP + phosphate + 2 H(+). Its pathway is pyrimidine metabolism; CTP biosynthesis via de novo pathway; CTP from UDP: step 2/2. With respect to regulation, allosterically activated by GTP, when glutamine is the substrate; GTP has no effect on the reaction when ammonia is the substrate. The allosteric effector GTP functions by stabilizing the protein conformation that binds the tetrahedral intermediate(s) formed during glutamine hydrolysis. Inhibited by the product CTP, via allosteric rather than competitive inhibition. In terms of biological role, catalyzes the ATP-dependent amination of UTP to CTP with either L-glutamine or ammonia as the source of nitrogen. Regulates intracellular CTP levels through interactions with the four ribonucleotide triphosphates. The chain is CTP synthase from Stenotrophomonas maltophilia (strain R551-3).